The primary structure comprises 1076 residues: Carbamoyl phosphate synthase large chain (1076 aa).

Residues 1 to 403 (MPKRTDIQSI…SLQKALRGLE (403 aa)) form a carboxyphosphate synthetic domain region. Arginine 129, arginine 169, glycine 175, glycine 176, glutamate 208, leucine 210, glutamate 215, glycine 241, isoleucine 242, histidine 243, glutamine 285, and glutamate 299 together coordinate ATP. The ATP-grasp 1 domain maps to 133 to 328 (DKAMKSIGLE…IAKVAAKLAV (196 aa)). Mg(2+) contacts are provided by glutamine 285, glutamate 299, and asparagine 301. 3 residues coordinate Mn(2+): glutamine 285, glutamate 299, and asparagine 301. Residues 404–553 (VGAAGLDEKV…YSTYDEECEA (150 aa)) form an oligomerization domain region. Positions 554-935 (NPTDKDKIMV…AYAKAELGCG (382 aa)) are carbamoyl phosphate synthetic domain. Residues 678-869 (QQAVQRLGLK…LAKIAARVMV (192 aa)) form the ATP-grasp 2 domain. Residues arginine 714, arginine 753, leucine 755, glutamate 760, glycine 785, valine 786, histidine 787, serine 788, glutamine 828, and glutamate 840 each coordinate ATP. Mg(2+) contacts are provided by glutamine 828, glutamate 840, and asparagine 842. Residues glutamine 828, glutamate 840, and asparagine 842 each coordinate Mn(2+). The MGS-like domain occupies 936–1076 (SVYPEGGRAL…LHARVKANQA (141 aa)). Residues 936–1076 (SVYPEGGRAL…LHARVKANQA (141 aa)) form an allosteric domain region.

Belongs to the CarB family. Composed of two chains; the small (or glutamine) chain promotes the hydrolysis of glutamine to ammonia, which is used by the large (or ammonia) chain to synthesize carbamoyl phosphate. Tetramer of heterodimers (alpha,beta)4. Mg(2+) serves as cofactor. The cofactor is Mn(2+).

The enzyme catalyses hydrogencarbonate + L-glutamine + 2 ATP + H2O = carbamoyl phosphate + L-glutamate + 2 ADP + phosphate + 2 H(+). It carries out the reaction hydrogencarbonate + NH4(+) + 2 ATP = carbamoyl phosphate + 2 ADP + phosphate + 2 H(+). Its pathway is amino-acid biosynthesis; L-arginine biosynthesis; carbamoyl phosphate from bicarbonate: step 1/1. It participates in pyrimidine metabolism; UMP biosynthesis via de novo pathway; (S)-dihydroorotate from bicarbonate: step 1/3. In terms of biological role, large subunit of the glutamine-dependent carbamoyl phosphate synthetase (CPSase). CPSase catalyzes the formation of carbamoyl phosphate from the ammonia moiety of glutamine, carbonate, and phosphate donated by ATP, constituting the first step of 2 biosynthetic pathways, one leading to arginine and/or urea and the other to pyrimidine nucleotides. The large subunit (synthetase) binds the substrates ammonia (free or transferred from glutamine from the small subunit), hydrogencarbonate and ATP and carries out an ATP-coupled ligase reaction, activating hydrogencarbonate by forming carboxy phosphate which reacts with ammonia to form carbamoyl phosphate. The protein is Carbamoyl phosphate synthase large chain of Vibrio cholerae serotype O1 (strain ATCC 39315 / El Tor Inaba N16961).